Consider the following 97-residue polypeptide: UPF0235 protein cbdbA1230 (97 aa).

It belongs to the UPF0235 family.

The protein is UPF0235 protein cbdbA1230 of Dehalococcoides mccartyi (strain CBDB1).